The following is a 588-amino-acid chain: Tetratricopeptide repeat protein 39B (588 aa).

TPR repeat units follow at residues 294–327, 485–518, and 526–559; these read SIIL…QQEW, CLVQ…EKRV, and PFTF…YKDY.

Belongs to the TTC39 family.

May be involved in lipid metabolism. In Xenopus tropicalis (Western clawed frog), this protein is Tetratricopeptide repeat protein 39B (ttc39b).